A 168-amino-acid chain; its full sequence is Fusaric acid resistance protein FusE (168 aa).

In terms of biological role, involved in the resistance (detoxification) of the fungal toxin fusaric acid. In Burkholderia cepacia (Pseudomonas cepacia), this protein is Fusaric acid resistance protein FusE (fusE).